We begin with the raw amino-acid sequence, 300 residues long: Bifunctional protein FolD (300 aa).

NADP(+) contacts are provided by residues 168–170 (GRS), serine 193, and isoleucine 234.

This sequence belongs to the tetrahydrofolate dehydrogenase/cyclohydrolase family. As to quaternary structure, homodimer.

It catalyses the reaction (6R)-5,10-methylene-5,6,7,8-tetrahydrofolate + NADP(+) = (6R)-5,10-methenyltetrahydrofolate + NADPH. It carries out the reaction (6R)-5,10-methenyltetrahydrofolate + H2O = (6R)-10-formyltetrahydrofolate + H(+). It participates in one-carbon metabolism; tetrahydrofolate interconversion. In terms of biological role, catalyzes the oxidation of 5,10-methylenetetrahydrofolate to 5,10-methenyltetrahydrofolate and then the hydrolysis of 5,10-methenyltetrahydrofolate to 10-formyltetrahydrofolate. This Ehrlichia canis (strain Jake) protein is Bifunctional protein FolD.